The sequence spans 535 residues: MEEAELLKERLQAITNKRKIQEDIAQRRIQIEEEKLKLHHLKKKALREKWLLDGLSTLSSEEQEDMLRQTQADQQQIKHLESSTDRLEQEIDGLEKEELQVSTKEVCVLQRLKSVERTTEDIIKAVKAEVREEPVHDIYAGIPDLPASYKPFFVKRMESATQEDGEEPRKALFAMEIKVEKDIKSGKSTVLSTIPVPSSEFEDAGVKVYDDGRKSIYALKSEGRGTQNGVDTLAPVEVEDLLRKATEKRSESPTEYHEPVFSNAYGSTQKGYISPRMNGHNSPHSENGVTQNGIVNKEALPCPTVPREVSRIKGPFPEESNISHNQPSMETQAEEPMADHTEHQPTVQRNHYKEIPNNLGDYNPDFSSLNLEEDMHYNVVHATPCCTDDSEPVTMIFMGYKHADDGDVKPISDYEGIIRAELVVIDDDDDDDDDEEADKKGEENTKESVSVSPIIRNQVITSSKIQDSIKKPTNQNITLNNQLPYKNSMSLQEQEASLGYNSFPIPNKQIVEDGTEDPSLTALRIRMAKLGRKVI.

A coiled-coil region spans residues 1-105 (MEEAELLKER…KEELQVSTKE (105 aa)). Positions 423–450 (VVIDDDDDDDDDEEADKKGEENTKESVS) are disordered. A compositionally biased stretch (acidic residues) spans 424–436 (VIDDDDDDDDDEE). The segment covering 437–446 (ADKKGEENTK) has biased composition (basic and acidic residues).

This sequence belongs to the paralemmin family.

Its subcellular location is the cytoplasm. It localises to the cell projection. The protein resides in the dendrite. The protein localises to the dendritic spine. This chain is Palmdelphin (palmd), found in Xenopus laevis (African clawed frog).